Here is a 100-residue protein sequence, read N- to C-terminus: Urease subunit gamma (100 aa).

The protein belongs to the urease gamma subunit family. As to quaternary structure, heterotrimer of UreA (gamma), UreB (beta) and UreC (alpha) subunits. Three heterotrimers associate to form the active enzyme.

The protein localises to the cytoplasm. It catalyses the reaction urea + 2 H2O + H(+) = hydrogencarbonate + 2 NH4(+). It participates in nitrogen metabolism; urea degradation; CO(2) and NH(3) from urea (urease route): step 1/1. In Cupriavidus metallidurans (strain ATCC 43123 / DSM 2839 / NBRC 102507 / CH34) (Ralstonia metallidurans), this protein is Urease subunit gamma.